The primary structure comprises 646 residues: Phosphomethylpyrimidine synthase (646 aa).

Residues 1–13 (MNIRSNPDTTRPA) are compositionally biased toward polar residues. The segment at 1–21 (MNIRSNPDTTRPAVTTGGLPS) is disordered. Substrate-binding positions include Asn221, Met250, Tyr279, His315, 335–337 (SRG), 376–379 (DGLR), and Glu415. His419 provides a ligand contact to Zn(2+). Tyr442 lines the substrate pocket. His483 serves as a coordination point for Zn(2+). [4Fe-4S] cluster contacts are provided by Cys563, Cys566, and Cys571.

The protein belongs to the ThiC family. In terms of assembly, homodimer. Requires [4Fe-4S] cluster as cofactor.

It catalyses the reaction 5-amino-1-(5-phospho-beta-D-ribosyl)imidazole + S-adenosyl-L-methionine = 4-amino-2-methyl-5-(phosphooxymethyl)pyrimidine + CO + 5'-deoxyadenosine + formate + L-methionine + 3 H(+). Its pathway is cofactor biosynthesis; thiamine diphosphate biosynthesis. Its function is as follows. Catalyzes the synthesis of the hydroxymethylpyrimidine phosphate (HMP-P) moiety of thiamine from aminoimidazole ribotide (AIR) in a radical S-adenosyl-L-methionine (SAM)-dependent reaction. The sequence is that of Phosphomethylpyrimidine synthase from Rhodopseudomonas palustris (strain HaA2).